Here is a 204-residue protein sequence, read N- to C-terminus: Kunitz type trypsin inhibitor 106 (204 aa).

The first 26 residues, 1–26, serve as a signal peptide directing secretion; that stretch reads MSMRLSIRTLIILAHVCLFITTTTIA. Asn-62 carries an N-linked (GlcNAc...) asparagine glycan. Cys-65 and Cys-112 are joined by a disulfide. Asn-141 carries an N-linked (GlcNAc...) asparagine glycan. Intrachain disulfides connect Cys-164/Cys-176 and Cys-169/Cys-172.

This sequence belongs to the protease inhibitor I3 (leguminous Kunitz-type inhibitor) family. In terms of assembly, interacts with SCP1 and CP. As to expression, expressed at low levels in non-mycorrhizal roots.

The protein localises to the secreted. Its subcellular location is the extracellular space. It is found in the apoplast. Functionally, protease inhibitor that, together with SCP1, controls mycorrhiza establishment and arbuscule development during root colonization by arbuscular mycorrhizal (AM) fungi (e.g. Rhizophagus irregularis), probably by degrading SCP1 in the apoplast of the periarbuscular region. The chain is Kunitz type trypsin inhibitor 106 from Medicago truncatula (Barrel medic).